The primary structure comprises 556 residues: Urocanate hydratase (556 aa).

Residues 52–53 (GG), Gln130, 176–178 (GMG), Glu196, Arg201, 242–243 (NA), 263–267 (QTSAH), 273–274 (YL), and Tyr322 contribute to the NAD(+) site. Residue Cys410 is part of the active site. Gly492 lines the NAD(+) pocket.

Belongs to the urocanase family. The cofactor is NAD(+).

It is found in the cytoplasm. It catalyses the reaction 4-imidazolone-5-propanoate = trans-urocanate + H2O. The protein operates within amino-acid degradation; L-histidine degradation into L-glutamate; N-formimidoyl-L-glutamate from L-histidine: step 2/3. Its function is as follows. Catalyzes the conversion of urocanate to 4-imidazolone-5-propionate. This Bradyrhizobium diazoefficiens (strain JCM 10833 / BCRC 13528 / IAM 13628 / NBRC 14792 / USDA 110) protein is Urocanate hydratase.